Consider the following 248-residue polypeptide: Cytochrome c oxidase subunit 2 (248 aa).

At 1–43 the chain is on the mitochondrial intermembrane side; that stretch reads MTNLLNNWLIINQFGYDLPEPWQLGLQDAAHPVMEEIIFFHDQ. The chain crosses the membrane as a helical span at residues 44-65; the sequence is VMFILIIIITTVLWLIVKALSG. The Mitochondrial matrix segment spans residues 66–79; that stretch reads KAYHRYLVDGTLLE. The chain crosses the membrane as a helical span at residues 80 to 99; it reads IIWTIVPAIILILIAFPSLK. The Mitochondrial intermembrane segment spans residues 100–248; sequence LLYLMDEVMD…INWVLSGSDE (149 aa). Cu cation-binding residues include His-180, Cys-215, Glu-217, Cys-219, His-223, and Met-226. Residue Glu-217 coordinates Mg(2+).

This sequence belongs to the cytochrome c oxidase subunit 2 family. In terms of assembly, component of the cytochrome c oxidase (complex IV, CIV), a multisubunit enzyme composed of a catalytic core of 3 subunits and several supernumerary subunits. The complex exists as a monomer or a dimer and forms supercomplexes (SCs) in the inner mitochondrial membrane with ubiquinol-cytochrome c oxidoreductase (cytochrome b-c1 complex, complex III, CIII). Cu cation serves as cofactor.

It localises to the mitochondrion inner membrane. It catalyses the reaction 4 Fe(II)-[cytochrome c] + O2 + 8 H(+)(in) = 4 Fe(III)-[cytochrome c] + 2 H2O + 4 H(+)(out). In terms of biological role, component of the cytochrome c oxidase, the last enzyme in the mitochondrial electron transport chain which drives oxidative phosphorylation. The respiratory chain contains 3 multisubunit complexes succinate dehydrogenase (complex II, CII), ubiquinol-cytochrome c oxidoreductase (cytochrome b-c1 complex, complex III, CIII) and cytochrome c oxidase (complex IV, CIV), that cooperate to transfer electrons derived from NADH and succinate to molecular oxygen, creating an electrochemical gradient over the inner membrane that drives transmembrane transport and the ATP synthase. Cytochrome c oxidase is the component of the respiratory chain that catalyzes the reduction of oxygen to water. Electrons originating from reduced cytochrome c in the intermembrane space (IMS) are transferred via the dinuclear copper A center (CU(A)) of subunit 2 and heme A of subunit 1 to the active site in subunit 1, a binuclear center (BNC) formed by heme A3 and copper B (CU(B)). The BNC reduces molecular oxygen to 2 water molecules using 4 electrons from cytochrome c in the IMS and 4 protons from the mitochondrial matrix. This Metridium senile (Brown sea anemone) protein is Cytochrome c oxidase subunit 2 (COII).